Here is a 621-residue protein sequence, read N- to C-terminus: Leucine aminopeptidase (621 aa).

The propeptide occupies 1 to 73; it reads MPLLRSSQHI…ISNRKEFRKM (73 aa). Residues 129 to 152 form a disordered region; that stretch reads SSSGGSGGNGGSAGSSGNGEGGAQ. Over residues 132–150 the composition is skewed to gly residues; it reads GGSGGNGGSAGSSGNGEGG. A peptide is bound by residues Lys-390, Asp-395, and Lys-402. Residues Lys-390 and Asp-395 each coordinate Zn(2+). Residues 400–417 are L13 loop; sequence NLKAAPGSMIDLMKFDMS. Lys-402 is a catalytic residue. The Zn(2+) site is built by Asp-410, Met-412, Asp-415, Asp-475, and Glu-477. Asp-415 and Asp-475 together coordinate a peptide. Arg-479 is an active-site residue.

It belongs to the peptidase M17 family. As to quaternary structure, homohexamer composed of dimer of trimers. Both the identity and concentration of metal ions available dictate the extent to which oligomerization occurs; Mn(2+) and Co(2+) induces oligomerization, whereas Mg(2+) has no effect, and Zn(2+) causes irreversible protein aggregation in vitro. Requires Zn(2+) as cofactor.

It localises to the cytoplasm. It catalyses the reaction Release of an N-terminal amino acid, Xaa-|-Yaa-, in which Xaa is preferably Leu, but may be other amino acids including Pro although not Arg or Lys, and Yaa may be Pro. Amino acid amides and methyl esters are also readily hydrolyzed, but rates on arylamides are exceedingly low.. The catalysed reaction is L-cysteinylglycine + H2O = L-cysteine + glycine. With respect to regulation, oligomerization is required for catalytic activity and is metal-dependent. The type of metal that binds the 2 metal binding sites influences catalytic activity and substrate specificity. In vitro, activated by Co(2+), Mn(2+), Ni(2+), Mg(2+) and Zn(2+) with decreasing strength. Occupancy of the site 2 is essential and sufficient for activating the enzyme but occupation of the 2 sites is necessary for full catalytic activity. Inhibited by Ca(2+). Inhibited by fungal metabolite bestatin. Its function is as follows. Aminopeptidase which preferentially cleaves leucine residues from the N-terminus of peptides. Also, has some activity towards tryptophan and methionine and has very low activity towards alanine, arginine, asparagine, phenylalanine and tyrosine. No activity towards histidine, serine, valine, isoleucine, glycine, aspartic acid and glutamic acid. In addition, cleaves the Cys-Gly dipeptide, probably as part of the glutathione regulation pathway; cleavage only occurs in the presence of Mn(2+). Plays a role in the final step of host hemoglobin catabolism, by cleaving hemoglobin-derived oligopeptides providing a source of amino acids for the parasite protein synthesis and for the maintenance of osmotic homeostasis. This Plasmodium vivax (strain Salvador I) protein is Leucine aminopeptidase.